Reading from the N-terminus, the 440-residue chain is Transposon Ty1-BR Gag polyprotein (440 aa).

Composition is skewed to polar residues over residues 1 to 10 (MESQQLSNYP), 48 to 60 (TKAN…TPAS), and 127 to 152 (QSQF…GNTF). Disordered stretches follow at residues 1–93 (MESQ…MMTQ), 126–173 (PQSQ…RPPP), and 352–440 (GSRN…PETY). Over residues 153-165 (TDSSSADSDMTST) the composition is skewed to low complexity. The segment at 299–401 (NNGIHINNKV…NSKSKTARAH (103 aa)) is RNA-binding. Residues 402-418 (NVSTSNNSPSTDNDSIS) are compositionally biased toward low complexity. S416 bears the Phosphoserine mark. Over residues 419 to 428 (KSTTEPIQLN) the composition is skewed to polar residues. The span at 429-440 (NKHDLHLRPETY) shows a compositional bias: basic and acidic residues.

Homotrimer.

The protein resides in the cytoplasm. In terms of biological role, capsid protein (CA) is the structural component of the virus-like particle (VLP), forming the shell that encapsulates the retrotransposons dimeric RNA genome. The particles are assembled from trimer-clustered units and there are holes in the capsid shells that allow for the diffusion of macromolecules. CA also has nucleocapsid-like chaperone activity, promoting primer tRNA(i)-Met annealing to the multipartite primer-binding site (PBS), dimerization of Ty1 RNA and initiation of reverse transcription. In Saccharomyces cerevisiae (strain ATCC 204508 / S288c) (Baker's yeast), this protein is Transposon Ty1-BR Gag polyprotein (TY1A-BR).